We begin with the raw amino-acid sequence, 184 residues long: Ribosome-recycling factor (184 aa).

It belongs to the RRF family.

It localises to the cytoplasm. Responsible for the release of ribosomes from messenger RNA at the termination of protein biosynthesis. May increase the efficiency of translation by recycling ribosomes from one round of translation to another. This Lachnoclostridium phytofermentans (strain ATCC 700394 / DSM 18823 / ISDg) (Clostridium phytofermentans) protein is Ribosome-recycling factor.